A 320-amino-acid polypeptide reads, in one-letter code: Pyrroline-5-carboxylate reductase (320 aa).

This sequence belongs to the pyrroline-5-carboxylate reductase family.

The enzyme catalyses L-proline + NADP(+) = (S)-1-pyrroline-5-carboxylate + NADPH + 2 H(+). It carries out the reaction L-proline + NAD(+) = (S)-1-pyrroline-5-carboxylate + NADH + 2 H(+). It functions in the pathway amino-acid biosynthesis; L-proline biosynthesis; L-proline from L-glutamate 5-semialdehyde: step 1/1. This is Pyrroline-5-carboxylate reductase (P5CR) from Lophium arboricola (Zalerion arboricola).